The primary structure comprises 113 residues: U11-theraphotoxin-Hhn1a (113 aa).

A signal peptide spans methionine 1–alanine 21. A propeptide spanning residues aspartate 22 to arginine 74 is cleaved from the precursor. The interval glutamate 61–aspartate 83 is disordered. 3 cysteine pairs are disulfide-bonded: cysteine 75/cysteine 90, cysteine 82/cysteine 95, and cysteine 89/cysteine 110.

It belongs to the neurotoxin 14 (magi-1) family. 01 (HNTX-16) subfamily. Expressed by the venom gland.

The protein localises to the secreted. In terms of biological role, probable ion channel inhibitor. This Cyriopagopus hainanus (Chinese bird spider) protein is U11-theraphotoxin-Hhn1a.